Here is a 262-residue protein sequence, read N- to C-terminus: Nickel import ATP-binding protein NikD (262 aa).

An ABC transporter domain is found at 6-249 (LAIEGLTATT…PGHEVTRMLV (244 aa)). 42–49 (GASGSGKS) provides a ligand contact to ATP.

Belongs to the ABC transporter superfamily. Nickel importer (TC 3.A.1.5.3) family. In terms of assembly, the complex is composed of two ATP-binding proteins (NikD and NikE), two transmembrane proteins (NikB and NikC) and a solute-binding protein (NikA).

The protein localises to the cell inner membrane. It catalyses the reaction Ni(2+)(out) + ATP + H2O = Ni(2+)(in) + ADP + phosphate + H(+). In terms of biological role, part of the ABC transporter complex NikABCDE involved in nickel import. Responsible for energy coupling to the transport system. The polypeptide is Nickel import ATP-binding protein NikD (Brucella suis biovar 1 (strain 1330)).